We begin with the raw amino-acid sequence, 267 residues long: Transcription factor LBX1 (267 aa).

The span at 1 to 21 (MTSKDEAKSSASSVEERRRNA) shows a compositional bias: basic and acidic residues. The disordered stretch occupies residues 1–36 (MTSKDEAKSSASSVEERRRNALDLLPPPANSNKPLT). Residues 127-186 (RRKSRTAFTNHQIYELEKRFLYQKYLSPADRDQIAQQLGLTNAQVITWFQNRRAKLKRDL) constitute a DNA-binding region (homeobox). Residues 211–267 (SELEESGSERGNSRSRSPQLGLTSNHMPLSPSXPLTDQHASKECSEDEEDVEIDVDD) are disordered. Over residues 228–237 (PQLGLTSNHM) the composition is skewed to polar residues. A compositionally biased stretch (acidic residues) spans 255–267 (SEDEEDVEIDVDD).

Expressed in all myoblasts that will populate body wall muscles as well as in a group of cells the migrate into the head.

The protein resides in the nucleus. Transcription factor that controls hypaxial muscle development by down-regulating myod1 and cdkn1b/p27, thereby allowing myoblasts to proliferate before the onset of terminal differentiation. This is Transcription factor LBX1 from Xenopus laevis (African clawed frog).